Here is a 390-residue protein sequence, read N- to C-terminus: DNA replication and repair protein RecF (390 aa).

30 to 37 is an ATP binding site; that stretch reads GDNAQGKS.

The protein belongs to the RecF family.

Its subcellular location is the cytoplasm. Functionally, the RecF protein is involved in DNA metabolism; it is required for DNA replication and normal SOS inducibility. RecF binds preferentially to single-stranded, linear DNA. It also seems to bind ATP. The sequence is that of DNA replication and repair protein RecF from Trichodesmium erythraeum (strain IMS101).